The sequence spans 490 residues: Histone-lysine N-methyltransferase SMYD1 (490 aa).

The SET domain occupies 7 to 253 (ENVEVFTAEG…EGEELTVSYI (247 aa)). 17 to 19 (KGR) contacts S-adenosyl-L-methionine. Zn(2+)-binding residues include Cys-52, Cys-55, Cys-65, Cys-68, Cys-74, Cys-78, His-86, and Cys-90. Residues 52–90 (CHTCFKRQEKLHRCGQCKFAHYCDRTCQKDAWLNHKNEC) form an MYND-type zinc finger. Residues His-135 and 205 to 206 (NH) each bind S-adenosyl-L-methionine. Residue Cys-208 coordinates Zn(2+). Residue 270–272 (YYF) participates in S-adenosyl-L-methionine binding. 3 residues coordinate Zn(2+): Cys-274, Cys-276, and Cys-279.

Belongs to the class V-like SAM-binding methyltransferase superfamily. In terms of assembly, interacts with HDAC1, HDAC2 and HDAC3. Interacts (via MYND-type zinc finger) with NACA isoform skNAC. Expression seems mostly restricted to heart and skeletal muscle.

The protein localises to the cytoplasm. It localises to the nucleus. It carries out the reaction L-lysyl(4)-[histone H3] + 3 S-adenosyl-L-methionine = N(6),N(6),N(6)-trimethyl-L-lysyl(4)-[histone H3] + 3 S-adenosyl-L-homocysteine + 3 H(+). Functionally, methylates histone H3 at 'Lys-4' (H3K4me), seems able to perform both mono-, di-, and trimethylation. Acts as a transcriptional repressor. Essential for cardiomyocyte differentiation and cardiac morphogenesis. The protein is Histone-lysine N-methyltransferase SMYD1 (SMYD1) of Homo sapiens (Human).